We begin with the raw amino-acid sequence, 405 residues long: G1/S-specific cyclin-D (405 aa).

Residues F76–T200 form the Cyclin N-terminal domain. Residues Y301–L405 form a disordered region. A compositionally biased stretch (polar residues) spans P311–E321. Over residues Q326 to P335 the composition is skewed to basic and acidic residues. Over residues S358–S380 the composition is skewed to polar residues.

It belongs to the cyclin family. Cyclin D subfamily. In terms of assembly, interacts with cdk-4; the interaction is likely involved in regulating cdk-4 activity.

Functionally, in association with cdk-4, regulates the progression through the G1 phase of the cell cycle during postembryonic development. Regulates proliferation of the coelomocyte lineage and intestinal cells during late embryogenesis. In complex with cdk-4, involved in sex determination during gonadogenesis by regulating the asymmetric division of the somatic gonadal precursor cell (SGP). The protein is G1/S-specific cyclin-D of Caenorhabditis elegans.